The sequence spans 159 residues: MAKEKGRKLIAQNKKARHDYQILDTYEAGLVLSGTEVKSLRQGRASLADGFVQLDGHEAWLHNVHVPEYSQGTWTNHSARRKRKLLLHRVEIDKLESKSQETGHTIVPLALYFKDGRAKVEIALARGKKEYDKRQTLREKQDRREAERTISAIKRKQRA.

Residues 131–148 are compositionally biased toward basic and acidic residues; the sequence is YDKRQTLREKQDRREAER. Positions 131–159 are disordered; sequence YDKRQTLREKQDRREAERTISAIKRKQRA.

It belongs to the SmpB family.

It localises to the cytoplasm. In terms of biological role, required for rescue of stalled ribosomes mediated by trans-translation. Binds to transfer-messenger RNA (tmRNA), required for stable association of tmRNA with ribosomes. tmRNA and SmpB together mimic tRNA shape, replacing the anticodon stem-loop with SmpB. tmRNA is encoded by the ssrA gene; the 2 termini fold to resemble tRNA(Ala) and it encodes a 'tag peptide', a short internal open reading frame. During trans-translation Ala-aminoacylated tmRNA acts like a tRNA, entering the A-site of stalled ribosomes, displacing the stalled mRNA. The ribosome then switches to translate the ORF on the tmRNA; the nascent peptide is terminated with the 'tag peptide' encoded by the tmRNA and targeted for degradation. The ribosome is freed to recommence translation, which seems to be the essential function of trans-translation. The chain is SsrA-binding protein from Streptomyces coelicolor (strain ATCC BAA-471 / A3(2) / M145).